A 55-amino-acid chain; its full sequence is Large ribosomal subunit protein bL33 (55 aa).

It belongs to the bacterial ribosomal protein bL33 family.

This chain is Large ribosomal subunit protein bL33, found in Escherichia coli (strain K12 / DH10B).